The chain runs to 470 residues: 3-isopropylmalate dehydratase large subunit (470 aa).

Residues cysteine 351, cysteine 411, and cysteine 414 each contribute to the [4Fe-4S] cluster site.

The protein belongs to the aconitase/IPM isomerase family. LeuC type 1 subfamily. In terms of assembly, heterodimer of LeuC and LeuD. It depends on [4Fe-4S] cluster as a cofactor.

The catalysed reaction is (2R,3S)-3-isopropylmalate = (2S)-2-isopropylmalate. It participates in amino-acid biosynthesis; L-leucine biosynthesis; L-leucine from 3-methyl-2-oxobutanoate: step 2/4. Catalyzes the isomerization between 2-isopropylmalate and 3-isopropylmalate, via the formation of 2-isopropylmaleate. This chain is 3-isopropylmalate dehydratase large subunit, found in Rhodopseudomonas palustris (strain BisA53).